Here is a 197-residue protein sequence, read N- to C-terminus: uncharacterized protein (197 aa).

Helical transmembrane passes span 9 to 29 (IYIL…RFIL), 67 to 87 (LASL…ILML), 104 to 124 (IIAV…ISVI), and 160 to 180 (GLDL…MLVI).

The protein belongs to the YggT family.

Its subcellular location is the cell membrane. This is an uncharacterized protein from Pseudomonas aeruginosa (strain ATCC 15692 / DSM 22644 / CIP 104116 / JCM 14847 / LMG 12228 / 1C / PRS 101 / PAO1).